The sequence spans 286 residues: Putative sensory transducer protein YfmS (286 aa).

Residues 68–286 (ITDAIRSNQK…KMAEKALEEE (219 aa)) enclose the Methyl-accepting transducer domain.

It belongs to the methyl-accepting chemotaxis (MCP) protein family.

In terms of biological role, chemotactic-signal transducers respond to changes in the concentration of attractants and repellents in the environment, transduce a signal from the outside to the inside of the cell, and facilitate sensory adaptation through the variation of the level of methylation. Attractants increase the level of methylation while repellents decrease the level of methylation. The chain is Putative sensory transducer protein YfmS (yfmS) from Bacillus subtilis (strain 168).